Here is a 316-residue protein sequence, read N- to C-terminus: Biotin synthase (316 aa).

In terms of domain architecture, Radical SAM core spans 36 to 260 (NKIQISMLLN…LMPKSYIRLA (225 aa)). Cysteine 51, cysteine 55, and cysteine 58 together coordinate [4Fe-4S] cluster. [2Fe-2S] cluster is bound by residues cysteine 95, cysteine 126, cysteine 186, and arginine 258.

The protein belongs to the radical SAM superfamily. Biotin synthase family. In terms of assembly, homodimer. [4Fe-4S] cluster serves as cofactor. [2Fe-2S] cluster is required as a cofactor.

It carries out the reaction (4R,5S)-dethiobiotin + (sulfur carrier)-SH + 2 reduced [2Fe-2S]-[ferredoxin] + 2 S-adenosyl-L-methionine = (sulfur carrier)-H + biotin + 2 5'-deoxyadenosine + 2 L-methionine + 2 oxidized [2Fe-2S]-[ferredoxin]. It participates in cofactor biosynthesis; biotin biosynthesis; biotin from 7,8-diaminononanoate: step 2/2. Its function is as follows. Catalyzes the conversion of dethiobiotin (DTB) to biotin by the insertion of a sulfur atom into dethiobiotin via a radical-based mechanism. The protein is Biotin synthase of Lawsonia intracellularis (strain PHE/MN1-00).